Reading from the N-terminus, the 445-residue chain is Serine--tRNA ligase (445 aa).

250 to 252 (TAE) provides a ligand contact to L-serine. An ATP-binding site is contributed by 281–283 (RAE). Glu304 contributes to the L-serine binding site. Residue 368-371 (EISS) coordinates ATP. Ser404 is an L-serine binding site.

The protein belongs to the class-II aminoacyl-tRNA synthetase family. Type-1 seryl-tRNA synthetase subfamily. As to quaternary structure, homodimer. The tRNA molecule binds across the dimer.

It is found in the cytoplasm. The enzyme catalyses tRNA(Ser) + L-serine + ATP = L-seryl-tRNA(Ser) + AMP + diphosphate + H(+). It catalyses the reaction tRNA(Sec) + L-serine + ATP = L-seryl-tRNA(Sec) + AMP + diphosphate + H(+). It participates in aminoacyl-tRNA biosynthesis; selenocysteinyl-tRNA(Sec) biosynthesis; L-seryl-tRNA(Sec) from L-serine and tRNA(Sec): step 1/1. Catalyzes the attachment of serine to tRNA(Ser). Is also able to aminoacylate tRNA(Sec) with serine, to form the misacylated tRNA L-seryl-tRNA(Sec), which will be further converted into selenocysteinyl-tRNA(Sec). In Azorhizobium caulinodans (strain ATCC 43989 / DSM 5975 / JCM 20966 / LMG 6465 / NBRC 14845 / NCIMB 13405 / ORS 571), this protein is Serine--tRNA ligase.